The chain runs to 145 residues: Small ribosomal subunit protein uS19 (145 aa).

Belongs to the universal ribosomal protein uS19 family. As to quaternary structure, component of the small ribosomal subunit.

Its subcellular location is the cytoplasm. Component of the small ribosomal subunit. The ribosome is a large ribonucleoprotein complex responsible for the synthesis of proteins in the cell. The sequence is that of Small ribosomal subunit protein uS19 (rps15) from Xenopus laevis (African clawed frog).